Here is a 320-residue protein sequence, read N- to C-terminus: o-succinylbenzoate synthase (320 aa).

Residue K133 is the Proton donor of the active site. D161, E190, and D213 together coordinate Mg(2+). Residue K235 is the Proton acceptor of the active site.

This sequence belongs to the mandelate racemase/muconate lactonizing enzyme family. MenC type 1 subfamily. A divalent metal cation serves as cofactor.

The enzyme catalyses (1R,6R)-6-hydroxy-2-succinyl-cyclohexa-2,4-diene-1-carboxylate = 2-succinylbenzoate + H2O. Its pathway is quinol/quinone metabolism; 1,4-dihydroxy-2-naphthoate biosynthesis; 1,4-dihydroxy-2-naphthoate from chorismate: step 4/7. The protein operates within quinol/quinone metabolism; menaquinone biosynthesis. Its function is as follows. Converts 2-succinyl-6-hydroxy-2,4-cyclohexadiene-1-carboxylate (SHCHC) to 2-succinylbenzoate (OSB). The protein is o-succinylbenzoate synthase of Salmonella enteritidis PT4 (strain P125109).